A 130-amino-acid chain; its full sequence is Cytochrome c-type biogenesis protein CcmE (130 aa).

Residues 1–7 (MKKKHKR) are Cytoplasmic-facing. The chain crosses the membrane as a helical; Signal-anchor for type II membrane protein span at residues 8-28 (LLITSGIFCFLSCAVFFILTT). Over 29–130 (LKENISFFYT…DENYKPKVLK (102 aa)) the chain is Extracellular. The heme site is built by His120 and Tyr124.

The protein belongs to the CcmE/CycJ family.

It localises to the cell membrane. Heme chaperone required for the biogenesis of c-type cytochromes. Transiently binds heme delivered by CcmC and transfers the heme to apo-cytochromes in a process facilitated by CcmF and CcmH. This Wolbachia pipientis subsp. Culex pipiens (strain wPip) protein is Cytochrome c-type biogenesis protein CcmE.